The following is a 1507-amino-acid chain: DDB1- and CUL4-associated factor 1 (1507 aa).

Residues 141-500 (QPLRTYSTGL…STLEILNLED (360 aa)) are protein kinase-like. Phosphoserine is present on residues Ser202 and Ser255. Residues 242–288 (HLDSGHKTSSRVNSTTKPEDGGLKKNKSAKQGDRENFRKAKQKLGFS) are disordered. In terms of domain architecture, Chromo spans 562 to 593 (SYTHEQIVEMMEFLIEYGPAQLYWEPAEVFLK). Lys701 carries the N6-acetyllysine modification. Ser828 bears the Phosphoserine mark. The region spanning 846-878 (PEKELLLLIRNHLISKGLGETATVLTKEADLPM) is the LisH domain. The residue at position 888 (Thr888) is a Phosphothreonine. Residues Ser895 and Ser898 each carry the phosphoserine modification. Positions 917–947 (AAVGASAPSAPTAHPQPRPPQGPLALPGPSY) are disordered. Residues Ser979 and Ser1000 each carry the phosphoserine modification. 5 WD repeats span residues 1091–1130 (EDES…EEAS), 1133–1174 (CHNS…DMKH), 1176–1213 (FTED…KLLT), 1215–1247 (FNPD…WDVR), and 1248–1290 (SAQA…LLHT). Residues 1091-1290 (EDESGFTCCA…DLRTFHLLHT (200 aa)) form a WD repeat-like region region. Short sequence motifs (DWD box) lie at residues 1242 to 1249 (VLWDVRSA) and 1278 to 1285 (EIWDLRTF). At Ser1328 the chain carries Phosphoserine. Residues 1393 to 1507 (RLAEDEDEEE…EDDIILSLNE (115 aa)) form a disordered region. Acidic residues-rich tracts occupy residues 1396–1483 (EDED…EEVE) and 1490–1501 (DSSDNSDLEDDI). The interval 1418–1507 (DDDTDDLDEL…EDDIILSLNE (90 aa)) is interaction with NF2.

Belongs to the VPRBP/DCAF1 family. As to quaternary structure, component of the DCX (DDB1-CUL4-X-box) E3 ubiquitin-protein ligase complex, named CUL4A-RBX1-DDB1-DCAF1/VPRBP complex. Interacts with DDB1; the interaction is direct. Also forms a ternary complex with DDA1 and DDB1. Interacts with NF2 (via FERM domain). Component of the EDVP complex, a E3 ligase complex containing DYRK2, EDD/UBR5, DDB1 and DCAF1. Interacts with DYRK2; the interaction is direct. Interacts with RAG1; the interaction is direct. Interacts with LLGL1 and LLGL2. Interacts with histone H3. Interacts with ESR1 and LATS1; probably recruited by LATS1 to promote ESR1 ubiquitination and ubiquitin-mediated proteasomal degradation. Directly interacts with TET1, TET2 and TET3 (via C-terminus). Interacts with CEP78; promoting DCAF1 localization to centrosomes. In terms of assembly, (Microbial infection) Interacts with HIV-1 virus Vpr protein; the interaction is direct. (Microbial infection) Interacts with HIV-2 virus Vpx protein; the interaction is direct and the complex recruits SAMHD1 to promote its ubiquitin-dependent proteasomal degradation. As to quaternary structure, (Microbial infection) Interacts (via C-terminus) with human cytomegalovirus protein UL35; this interaction induces the accumulation of cells in the G2 phase of the cell cycle. As to expression, ubiquitously expressed.

The protein localises to the cytoplasm. It localises to the nucleus. It is found in the cytoskeleton. The protein resides in the microtubule organizing center. Its subcellular location is the centrosome. It catalyses the reaction L-seryl-[protein] + ATP = O-phospho-L-seryl-[protein] + ADP + H(+). The enzyme catalyses L-threonyl-[protein] + ATP = O-phospho-L-threonyl-[protein] + ADP + H(+). The protein operates within protein modification; protein ubiquitination. Functionally, acts both as a substrate recognition component of E3 ubiquitin-protein ligase complexes and as an atypical serine/threonine-protein kinase, playing key roles in various processes such as cell cycle, telomerase regulation and histone modification. Probable substrate-specific adapter of a DCX (DDB1-CUL4-X-box) E3 ubiquitin-protein ligase complex, named CUL4A-RBX1-DDB1-DCAF1/VPRBP complex, which mediates ubiquitination and proteasome-dependent degradation of proteins such as NF2. Involved in the turnover of methylated proteins: recognizes and binds methylated proteins via its chromo domain, leading to ubiquitination of target proteins by the RBX1-DDB1-DCAF1/VPRBP complex. The CUL4A-RBX1-DDB1-DCAF1/VPRBP complex is also involved in B-cell development: DCAF1 is recruited by RAG1 to ubiquitinate proteins, leading to limit error-prone repair during V(D)J recombination. Also part of the EDVP complex, an E3 ligase complex that mediates ubiquitination of proteins such as TERT, leading to TERT degradation and telomerase inhibition. The EDVP complex also mediates ubiquitination and degradation of CCP110. Also acts as an atypical serine/threonine-protein kinase that specifically mediates phosphorylation of 'Thr-120' of histone H2A (H2AT120ph) in a nucleosomal context, thereby repressing transcription. H2AT120ph is present in the regulatory region of many tumor suppresor genes, down-regulates their transcription and is present at high level in a number of tumors. Involved in JNK-mediated apoptosis during cell competition process via its interaction with LLGL1 and LLGL2. By acting on TET dioxygenses, essential for oocyte maintenance at the primordial follicle stage, hence essential for female fertility. In terms of biological role, (Microbial infection) In case of infection by HIV-1 virus, it is recruited by HIV-1 Vpr in order to hijack the CUL4A-RBX1-DDB1-DCAF1/VPRBP function leading to arrest the cell cycle in G2 phase, and also to protect the viral protein from proteasomal degradation by another E3 ubiquitin ligase. The HIV-1 Vpr protein hijacks the CUL4A-RBX1-DDB1-DCAF1/VPRBP complex to promote ubiquitination and degradation of proteins such as TERT and ZIP/ZGPAT. (Microbial infection) In case of infection by HIV-2 virus, it is recruited by HIV-2 Vpx in order to hijack the CUL4A-RBX1-DDB1-DCAF1/VPRBP function leading to enhanced efficiency of macrophage infection and promotion of the replication of cognate primate lentiviruses in cells of monocyte/macrophage lineage. The chain is DDB1- and CUL4-associated factor 1 from Homo sapiens (Human).